The sequence spans 419 residues: Dual specificity mitogen-activated protein kinase kinase 7 (419 aa).

At Ala2 the chain carries N-acetylalanine. The stretch at 2-30 (AASSLEQKLSRLEAKLKQENREARRRIDL) forms a coiled coil. Over residues 18 to 30 (KQENREARRRIDL) the composition is skewed to basic and acidic residues. The tract at residues 18 to 76 (KQENREARRRIDLNLDISPQRPRPTLQLPLANDGGSRSPSSESSPQHPTPPARPRHMLG) is disordered. Low complexity predominate over residues 36 to 63 (PQRPRPTLQLPLANDGGSRSPSSESSPQ). Positions 37-57 (QRPRPTLQLPLANDGGSRSPS) are d domain. The Protein kinase domain occupies 120–380 (LENLGEMGSG…YNKLLEHSFI (261 aa)). Residues 126-134 (MGSGTCGQV) and Lys149 contribute to the ATP site. Asp243 serves as the catalytic Proton acceptor. The residue at position 271 (Ser271) is a Phosphoserine; by MAP3K. The residue at position 275 (Thr275) is a Phosphothreonine; by MAP3K. Residues 377–400 (HSFIKRYETLEVDVASWFKDVMAK) are DVD domain. Phosphoserine is present on Ser411.

Belongs to the protein kinase superfamily. STE Ser/Thr protein kinase family. MAP kinase kinase subfamily. In terms of assembly, interacts with isoform 1 of VRK2. Interacts (via its D domain) with its substrates MAPK8/JNK1, MAPK9/JNK2 and MAPK10/JNK3. Interacts (via its DVD domain) with MAP3Ks activators like MAP3K5/ASK1 and MAP3K1/MEKK1. Interacts with MAPK8IP1/JIP1, MAPK8IP2/JIP2 and MAPK8IP3/JIP3 scaffold proteins. Interacts with RASSF7, the interaction promotes phosphorylation. Found in a complex with SH3RF1, RAC1, MAP3K11/MLK3, MAPK8IP1/JIP1 and MAPK8/JNK1. Found in a complex with SH3RF1, RAC2, MAP3K7/TAK1, MAPK8IP1/JIP1, MAPK8/JNK1 and MAPK9/JNK2. Requires Mg(2+) as cofactor. In terms of processing, activated by phosphorylation on Ser-271 and Thr-275 by MAP kinase kinase kinases (MAP3Ks). Ubiquitous; with highest level of expression in skeletal muscle. Isoform 3 is found at low levels in placenta, fetal liver, and skeletal muscle.

Its subcellular location is the nucleus. The protein localises to the cytoplasm. It carries out the reaction L-seryl-[protein] + ATP = O-phospho-L-seryl-[protein] + ADP + H(+). The enzyme catalyses L-threonyl-[protein] + ATP = O-phospho-L-threonyl-[protein] + ADP + H(+). The catalysed reaction is L-tyrosyl-[protein] + ATP = O-phospho-L-tyrosyl-[protein] + ADP + H(+). With respect to regulation, activated by phosphorylation by specific MAP kinase kinase kinases such as MAP3K1/MEKK1, MAP3K3/MEKK3, MAP3K11/MLK3 and MAP3K12/DLK. Dual specificity protein kinase which acts as an essential component of the MAP kinase signal transduction pathway. Essential component of the stress-activated protein kinase/c-Jun N-terminal kinase (SAP/JNK) signaling pathway. With MAP2K4/MKK4, is the one of the only known kinase to directly activate the stress-activated protein kinase/c-Jun N-terminal kinases MAPK8/JNK1, MAPK9/JNK2 and MAPK10/JNK3. MAP2K4/MKK4 and MAP2K7/MKK7 both activate the JNKs by phosphorylation, but they differ in their preference for the phosphorylation site in the Thr-Pro-Tyr motif. MAP2K4/MKK4 shows preference for phosphorylation of the Tyr residue and MAP2K7/MKK7 for the Thr residue. The monophosphorylation of JNKs on the Thr residue is sufficient to increase JNK activity indicating that MAP2K7/MKK7 is important to trigger JNK activity, while the additional phosphorylation of the Tyr residue by MAP2K4/MKK4 ensures optimal JNK activation. Has a specific role in JNK signal transduction pathway activated by pro-inflammatory cytokines. The MKK/JNK signaling pathway is also involved in mitochondrial death signaling pathway, including the release cytochrome c, leading to apoptosis. Part of a non-canonical MAPK signaling pathway, composed of the upstream MAP3K12 kinase and downstream MAP kinases MAPK1/ERK2 and MAPK3/ERK1, that enhances the AP-1-mediated transcription of APP in response to APOE. This is Dual specificity mitogen-activated protein kinase kinase 7 (MAP2K7) from Homo sapiens (Human).